The sequence spans 570 residues: NADPH oxidase 2 (570 aa).

At 2–9 (GNWAVNEG) the chain is on the cytoplasmic side. A helical membrane pass occupies residues 10-36 (LSIFVILVWLGLNVFLFVWYYRVYDIP). Topologically, residues 37–46 (PKFFYTRKLL) are extracellular. Residues 47–72 (GSALALARAPAACLNFNCMLILLPVC) form a helical membrane-spanning segment. A Ferric oxidoreductase domain is found at 54-286 (RAPAACLNFN…MFLYLCERLV (233 aa)). The Cytoplasmic segment spans residues 73-95 (RNLLSFLRGSSACCSTRVRRQLD). The helical transmembrane segment at 96–130 (RNLTFHKMVAWMIALHSAIHTIAHLFNVEWCVNAR) threads the bilayer. His-101 and His-115 together coordinate heme b. Residues 131–163 (VNNSDPYSVALSELGDRQNESYLNFARKRIKNP) are Extracellular-facing. N-linked (GlcNAc...) asparagine glycans are attached at residues Asn-132 and Asn-149. Residue Lys-161 forms a Glycyl lysine isopeptide (Lys-Gly) (interchain with G-Cter in ubiquitin) linkage. The chain crosses the membrane as a helical span at residues 164 to 194 (EGGLYLAVTLLAGITGVVITLCLILIITSST). Residues 195 to 203 (KTIRRSYFE) are Cytoplasmic-facing. Residues Arg-199 and Ser-200 each contribute to the FAD site. A helical transmembrane segment spans residues 204–222 (VFWYTHHLFVIFFIGLAIH). Trp-206, His-209, His-222, Arg-226, and Ile-227 together coordinate heme b. Residues 223–267 (GAERIVRGQTAESLAVHNITVCEQKISEWGKIKECPIPQFAGNPP) lie on the Extracellular side of the membrane. N-linked (GlcNAc...) asparagine glycosylation is present at Asn-240. Lys-255 participates in a covalent cross-link: Glycyl lysine isopeptide (Lys-Gly) (interchain with G-Cter in ubiquitin). The heme b site is built by Met-268, Tyr-280, and Arg-287. A helical membrane pass occupies residues 268–285 (MTWKWIVGPMFLYLCERL). Over 286–570 (VRFWRSQQKV…VHFIFNKENF (285 aa)) the chain is Cytoplasmic. The FAD-binding FR-type domain occupies 287-397 (RFWRSQQKVV…DGPFGTASED (111 aa)). Residues Lys-294, Lys-299, Lys-306, Lys-328, and Lys-334 each participate in a glycyl lysine isopeptide (Lys-Gly) (interchain with G-Cter in ubiquitin) cross-link. FAD-binding residues include Trp-337, His-338, Pro-339, Thr-341, His-354, Arg-356, Trp-361, and Thr-362. Lys-381 participates in a covalent cross-link: Glycyl lysine isopeptide (Lys-Gly) (interchain with G-Cter in ubiquitin). Positions 411, 446, and 481 each coordinate NADPH. Residue Lys-506 forms a Glycyl lysine isopeptide (Lys-Gly) (interchain with G-Cter in ubiquitin) linkage. NADPH is bound at residue Arg-513. A Glycyl lysine isopeptide (Lys-Gly) (interchain with G-Cter in ubiquitin) cross-link involves residue Lys-567.

Component of the phagocyte NADPH oxidase core complex/cytochrome b558 complex, composed of CYBB (heavy chain (beta)) and CYBA (light chain (alpha)). Component of the phagocyte NADPH oxidase complex composed of an obligatory core heterodimer formed by the membrane proteins CYBA and CYBB and the cytosolic regulatory subunits NCF1/p47-phox, NCF2/p67-phox, NCF4/p40-phox and the small GTPase RAC1 or RAC2. Interacts with NCF1 (phosphorylated form). Interacts with NCF2; the interaction is enhanced in the presence of GBP7. Interacts with RAC2. Interacts with RAC1. Interacts with calprotectin (S100A8/9). Interacts with NRROS; the interaction is direct and impairs formation of a stable NADPH oxidase complex. Interacts with CYBC1; CYBC1 may act as a chaperone stabilizing Cytochrome b-245 heterodimer. The CYBA-CYBB complex interacts with GBP7. FAD serves as cofactor. In terms of processing, glycosylated. Post-translationally, phosphorylated on Ser and Thr residues by PKC during neutrophils activation. Phosphorylation enhances the NADPH oxidase activity and stimulates its interaction with RAC2, NCF2/p67-phox, and NCF1/p47-phox. Undergoes 'Lys-48'-linked polyubiquitination, likely by RNF145, triggering endoplasmic reticulum-associated degradation. As to expression, detected in neutrophils (at protein level).

It localises to the cell membrane. The catalysed reaction is NADPH + 2 O2 = 2 superoxide + NADP(+) + H(+). Its function is as follows. Catalytic subunit of the phagocyte NADPH oxidase complex that mediates the transfer of electrons from cytosolic NADPH to O2 to produce the superoxide anion (O2(-)). In the activated complex, electrons are first transferred from NADPH to flavin adenine dinucleotide (FAD) and subsequently transferred via two heme molecules to molecular oxygen, producing superoxide through an outer-sphere reaction. Activation of the NADPH oxidase complex is initiated by the assembly of cytosolic subunits of the NADPH oxidase complex with the core NADPH oxidase complex to form a complex at the plasma membrane or phagosomal membrane. This activation process is initiated by phosphorylation dependent binding of the cytosolic NCF1/p47-phox subunit to the C-terminus of CYBA/p22-phox. NADPH oxidase complex assembly is impaired through interaction with NRROS. This Homo sapiens (Human) protein is NADPH oxidase 2.